The following is an 848-amino-acid chain: Adenylate cyclase (848 aa).

The interval 1–535 (MYLYIETLKQ…DVSHHFPLRL (535 aa)) is catalytic. The interval 541-848 (KALYSPCEIR…DTPLLQQYFS (308 aa)) is regulatory. H609 is modified (phosphohistidine; by CRR).

The protein belongs to the adenylyl cyclase class-1 family.

It is found in the cytoplasm. It carries out the reaction ATP = 3',5'-cyclic AMP + diphosphate. This chain is Adenylate cyclase (cyaA), found in Escherichia coli O157:H7.